Reading from the N-terminus, the 327-residue chain is 2-methoxy-6-polyprenyl-1,4-benzoquinol methylase, mitochondrial (327 aa).

The N-terminal 49 residues, 1–49 (MAAPRCCVLWRVCGRGWWRATGHCRLPGCHRSWPWATLGTRSLSQEKRA), are a transit peptide targeting the mitochondrion. S-adenosyl-L-methionine-binding positions include Thr117, Asp171, and 199 to 200 (DA).

It belongs to the class I-like SAM-binding methyltransferase superfamily. MenG/UbiE family. As to quaternary structure, component of a multi-subunit COQ enzyme complex, composed of at least COQ3, COQ4, COQ5, COQ6, COQ7 and COQ9. Interacts with PYURF; the interaction is direct, stabilizes COQ5 protein and associates PYURF with COQ enzyme complex.

Its subcellular location is the mitochondrion inner membrane. The catalysed reaction is 2-methoxy-6-(all-trans-decaprenyl)benzene-1,4-diol + S-adenosyl-L-methionine = 5-methoxy-2-methyl-3-(all-trans-decaprenyl)benzene-1,4-diol + S-adenosyl-L-homocysteine + H(+). Its pathway is cofactor biosynthesis; ubiquinone biosynthesis. In terms of biological role, methyltransferase required for the conversion of 2-decaprenyl-6-methoxy-1,4-benzoquinol (DDMQH2) to 2-decaprenyl-3-methyl-6-methoxy-1,4-benzoquinol (DMQH2). The chain is 2-methoxy-6-polyprenyl-1,4-benzoquinol methylase, mitochondrial from Mus musculus (Mouse).